Reading from the N-terminus, the 607-residue chain is MTTPLSRIRNFSIIAHIDHGKSTLADRLIQFTGGLTEREMSAQVLDNMDIEKERGITIKAQTVRLSYTAKDGETYQLNLMDTPGHVDFAYEVSRSLAACEGALLVVDAAQGVEAQTLANVYQSIEHDHEIVPVINKIDLPAADVDKVKAEIEDIIGLPADDAVLASAKAGIGIEETLEAIVARIPPPRGDAAAPLVAMLVDSWYDPYLGVVILVRVVDGVLKKGQQIKFMQAGTTHLIDRVGCFTPKRTDLVEIGPGEIGFITAQIKDVAQARVGDTVTDAKKPAAAPLPGFKEVQPVVFCGLFPTDANDFEKLRESIQKLRLNDASFSFEMESSAALGFGFRCGFLGLLHLEIIQERLTREYDLDLITTAPSVVYKLKLSHTKNEAAKEVELHNPADMPDPNRIDEIEEPWIEAVIYVPDEYLGPILKLCQDRRGVQKNLTYVGGRAQITYELPLNEVVFDFYDRLKSISRGYASFDYHQIGHRPGDLVKMSILVNNEPVDALSMIVHRGSAESRGRGMCERLKDLIPRHMFKIPIQAAIGGKVIARETIAALRKDVTAKCYGGDATRKKKLLEKQKEGKKRMREYGNVNIPQEAFIAALRMGDDG.

A tr-type G domain is found at 6 to 188 (SRIRNFSIIA…AIVARIPPPR (183 aa)). GTP is bound by residues 18-23 (DHGKST) and 135-138 (NKID).

This sequence belongs to the TRAFAC class translation factor GTPase superfamily. Classic translation factor GTPase family. LepA subfamily.

Its subcellular location is the cell inner membrane. The enzyme catalyses GTP + H2O = GDP + phosphate + H(+). Required for accurate and efficient protein synthesis under certain stress conditions. May act as a fidelity factor of the translation reaction, by catalyzing a one-codon backward translocation of tRNAs on improperly translocated ribosomes. Back-translocation proceeds from a post-translocation (POST) complex to a pre-translocation (PRE) complex, thus giving elongation factor G a second chance to translocate the tRNAs correctly. Binds to ribosomes in a GTP-dependent manner. This is Elongation factor 4 from Sphingopyxis alaskensis (strain DSM 13593 / LMG 18877 / RB2256) (Sphingomonas alaskensis).